A 397-amino-acid chain; its full sequence is Putative F-box protein At2g04810 (397 aa).

Residues 20-68 (SDWSKLCPDVLRKIYETLRSPVDSHRAKIVCSNWYSVWKTCVKRPLCPL) enclose the F-box domain.

The chain is Putative F-box protein At2g04810 from Arabidopsis thaliana (Mouse-ear cress).